Here is a 272-residue protein sequence, read N- to C-terminus: Protein SSO0103 (272 aa).

Belongs to the CinA family.

This is Protein SSO0103 from Saccharolobus solfataricus (strain ATCC 35092 / DSM 1617 / JCM 11322 / P2) (Sulfolobus solfataricus).